Consider the following 913-residue polypeptide: Chitin synthase 1 (913 aa).

The segment at 1 to 27 (MSGAPPPSSGFAPRSYGQQPLSHAPRS) is disordered. Residues threonine 237, glutamate 241, and aspartate 291 each contribute to the UDP-N-acetyl-alpha-D-glucosamine site. A glycan (N-linked (GlcNAc...) asparagine) is linked at asparagine 420. Aspartate 496 is an active-site residue. Asparagine 510 carries an N-linked (GlcNAc...) asparagine glycan. The next 6 membrane-spanning stretches (helical) occupy residues 539–559 (WLNG…RIYS), 581–601 (YTAF…FIVF), 625–645 (AVYI…IIGL), 658–678 (FVGA…AGIF), 684–704 (TVHS…ASAL), and 711–731 (IFMT…IFTI). The Conserved SWG motif signature appears at 741–743 (SWG). Helical transmembrane passes span 800–820 (VLLT…YFAS) and 825–845 (MPVL…GSIG). Asparagine 867 and asparagine 900 each carry an N-linked (GlcNAc...) asparagine glycan.

This sequence belongs to the chitin synthase family. Class II subfamily. As to quaternary structure, homodimer. It depends on Mn(2+) as a cofactor.

It localises to the cell membrane. It carries out the reaction [(1-&gt;4)-N-acetyl-beta-D-glucosaminyl](n) + UDP-N-acetyl-alpha-D-glucosamine = [(1-&gt;4)-N-acetyl-beta-D-glucosaminyl](n+1) + UDP + H(+). The activity is inhibited by nikkomycin Z (NikZ). In terms of biological role, polymerizes chitin, a structural polymer of the cell wall and septum, by transferring the sugar moiety of UDP-GlcNAc to the non-reducing end of the growing chitin polymer. Involved in mycelial growth, sporangial production, zoospore release and pathogenesis. This is Chitin synthase 1 from Phytophthora sojae (strain P6497) (Soybean stem and root rot agent).